We begin with the raw amino-acid sequence, 2283 residues long: AT-rich interactive domain-containing protein 1A (2283 aa).

Positions 1 to 10 are enriched in low complexity; the sequence is MAAQVAPAAA. Disordered stretches follow at residues 1 to 333, 346 to 822, and 979 to 1006; these read MAAQ…PADM, AAAA…LPNA, and ATKM…TTTN. Ala2 is modified (N-acetylalanine). Residues 22 to 34 are compositionally biased toward basic and acidic residues; the sequence is ELKKAEQQQREEA. Ser56 and Ser77 each carry phosphoserine. Residues 77-93 are compositionally biased toward gly residues; that stretch reads SNGGGGGGGAGSGGGPG. 2 stretches are compositionally biased toward low complexity: residues 128-143 and 233-266; these read SSSD…AAAA and SSPR…SSSS. At Ser234 the chain carries Phosphoserine. Positions 274 to 287 are enriched in gly residues; it reads AMGGGGPSAAGGGT. The residue at position 287 (Thr287) is a Phosphothreonine. The LXXLL signature appears at 296–300; it reads LNQLL. Positions 296–307 are enriched in polar residues; it reads LNQLLTSPSSAR. Ser302 carries the post-translational modification Phosphoserine. Over residues 311 to 328 the composition is skewed to gly residues; that stretch reads GYPGGDYGGGPQDGGAGK. Residues Ser365 and Ser384 each carry the phosphoserine modification. The segment covering 402–427 has biased composition (low complexity); sequence PYSQQQGPPSGPQQGHGYPGQPYGSQ. Asymmetric dimethylarginine is present on Arg431. Polar residues-rich tracts occupy residues 438-451 and 459-470; these read GRAQ…SYAQ and QGPSAYGQQGQT. Low complexity-rich tracts occupy residues 471–547 and 554–596; these read PYYN…QHPQ and QPQA…YSQQ. Position 605 is a phosphoserine (Ser605). The segment covering 611–622 has biased composition (low complexity); that stretch reads SQASSAPSMTSS. The segment covering 629-638 has biased composition (polar residues); sequence MNLSLQSRPS. Residues 659–675 are compositionally biased toward low complexity; sequence SPGVSTSGISSSQGEQS. Residues 676 to 686 are compositionally biased toward polar residues; that stretch reads NPAQSPFSPHT. Phosphoserine is present on residues Ser697, Ser699, Ser703, Ser731, Ser765, and Ser773. 2 stretches are compositionally biased toward polar residues: residues 731–748 and 756–794; these read SGQS…SSIA and RNPQ…QNSM. The segment covering 795 to 822 has biased composition (low complexity); the sequence is GSYGPQGSQYGPQGGYPRQPNYNALPNA. Positions 1018–1109 constitute an ARID domain; it reads EPERKMWVDR…CLYAFECKIE (92 aa). Disordered regions lie at residues 1114 to 1484 and 1539 to 1636; these read PPPD…MMGG and RANH…PPMI. Low complexity predominate over residues 1142 to 1155; that stretch reads MQGPQTPQSTSSSM. Positions 1163 to 1178 are enriched in pro residues; the sequence is PPTPASTPHSQIPPLP. The residue at position 1185 (Ser1185) is a Phosphoserine. Positions 1198–1220 are enriched in polar residues; it reads PTFQKRNSMTPNPGYQPSMNTSD. Residue Ser1236 is modified to Phosphoserine. Arg1277 carries the post-translational modification Omega-N-methylarginine. Positions 1343-1368 are enriched in low complexity; it reads QFSTQGTPSSSPFPSQQTTMYQQQQQ. The short motif at 1369–1388 is the Nuclear localization signal element; sequence NYKRPMDGTYGPPAKRHEGE. Over residues 1395-1426 the composition is skewed to low complexity; it reads SAGQGQPQQQQLPAAQSQPASQPQAAQPSPQQ. 2 stretches are compositionally biased toward polar residues: residues 1427–1436 and 1469–1478; these read DVYNQYSNAY and PGSSAQQNMP. Over residues 1555 to 1579 the composition is skewed to pro residues; that stretch reads PYGPSAPVPPMTRPPPSNYQPPPSM. Ser1605 is subject to Phosphoserine. An N6-acetyllysine modification is found at Lys1613. Positions 1710 to 1714 match the LXXLL motif; that stretch reads LPGLL. 3 disordered regions span residues 1757 to 1782, 1872 to 1904, and 1917 to 1941; these read PAHT…GVGN, CPTP…PEKR, and SSTL…PFGI. Residues 1761 to 1782 show a composition bias toward acidic residues; that stretch reads EEEEEEHLDPKLEEEEEEGVGN. Phosphothreonine is present on residues Thr1874 and Thr1886. The span at 1882–1893 shows a compositional bias: low complexity; the sequence is TVEGTPGTTEQE. At Lys1903 the chain carries N6-acetyllysine. A compositionally biased stretch (basic and acidic residues) spans 1923 to 1935; it reads EGAKSAEATKESS. Ser1927 and Ser1942 each carry phosphoserine. 2 short sequence motifs (LXXLL) span residues 1965–1969 and 2083–2087; these read LCTLL and LDGLL.

Component of SWI/SNF chromatin remodeling complexes, in some of which it can be mutually exclusive with ARID1B/BAF250B. The canonical complex contains a catalytic subunit (either SMARCA4/BRG1/BAF190A or SMARCA2/BRM/BAF190B) and at least SMARCE1, ACTL6A/BAF53, SMARCC1/BAF155, SMARCC2/BAF170, and SMARCB1/SNF5/BAF47. Other subunits specific to each of the complexes may also be present permitting several possible combinations developmentally and tissue specific. Component of the BAF (SWI/SNF-A) complex, which includes at least actin (ACTB), ARID1A/BAF250A, ARID1B/BAF250B, SMARCA2/BRM, SMARCA4/BRG1/BAF190A, ACTL6A/BAF53, ACTL6B/BAF53B, SMARCE1/BAF57, SMARCC1/BAF155, SMARCC2/BAF170, SMARCB1/SNF5/INI1, and one or more SMARCD1/BAF60A, SMARCD2/BAF60B, or SMARCD3/BAF60C. In muscle cells, the BAF complex also contains DPF3. Component of neural progenitors-specific chromatin remodeling complex (npBAF complex) composed of at least, ARID1A/BAF250A or ARID1B/BAF250B, SMARCD1/BAF60A, SMARCD3/BAF60C, SMARCA2/BRM/BAF190B, SMARCA4/BRG1/BAF190A, SMARCB1/BAF47, SMARCC1/BAF155, SMARCE1/BAF57, SMARCC2/BAF170, PHF10/BAF45A, ACTL6A/BAF53A and actin. Component of neuron-specific chromatin remodeling complex (nBAF complex) composed of at least, ARID1A/BAF250A or ARID1B/BAF250B, SMARCD1/BAF60A, SMARCD3/BAF60C, SMARCA2/BRM/BAF190B, SMARCA4/BRG1/BAF190A, SMARCB1/BAF47, SMARCC1/BAF155, SMARCE1/BAF57, SMARCC2/BAF170, DPF1/BAF45B, DPF3/BAF45C, ACTL6B/BAF53B and actin. Component of a SWI/SNF-like EBAFa complex, at least composed of SMARCA4/BRG1/BAF190A, SMARCB1/BAF47/SNF5, ACTL6A/BAF53A, SMARCE1/BAF57, SMARCD1/BAF60A, SMARCC1/BAF155, SMARCC2/BAF170, BAF250A and MLLT1/ENL. Interacts through its C-terminus with SMARCA2/BRM/BAF190B and SMARCA4/BRG1/BAF190A. Interacts with SMARCC1/BAF155. Interacts with FOS (via bZIP domain and leucine-zipper region), FOSB isoform 1 and 2, FOSL1 and FOSL2. As to expression, widely expressed. Expressed at high levels in the testis.

The protein resides in the nucleus. Functionally, involved in transcriptional activation and repression of select genes by chromatin remodeling (alteration of DNA-nucleosome topology). Component of SWI/SNF chromatin remodeling complexes that carry out key enzymatic activities, changing chromatin structure by altering DNA-histone contacts within a nucleosome in an ATP-dependent manner. Binds DNA non-specifically. Belongs to the neural progenitors-specific chromatin remodeling complex (npBAF complex) and the neuron-specific chromatin remodeling complex (nBAF complex). During neural development a switch from a stem/progenitor to a postmitotic chromatin remodeling mechanism occurs as neurons exit the cell cycle and become committed to their adult state. The transition from proliferating neural stem/progenitor cells to postmitotic neurons requires a switch in subunit composition of the npBAF and nBAF complexes. As neural progenitors exit mitosis and differentiate into neurons, npBAF complexes which contain ACTL6A/BAF53A and PHF10/BAF45A, are exchanged for homologous alternative ACTL6B/BAF53B and DPF1/BAF45B or DPF3/BAF45C subunits in neuron-specific complexes (nBAF). The npBAF complex is essential for the self-renewal/proliferative capacity of the multipotent neural stem cells. The nBAF complex along with CREST plays a role regulating the activity of genes essential for dendrite growth. The protein is AT-rich interactive domain-containing protein 1A (Arid1a) of Mus musculus (Mouse).